The following is a 296-amino-acid chain: Phosphatidylglycerol--prolipoprotein diacylglyceryl transferase (296 aa).

3 consecutive transmembrane segments (helical) span residues 17-37 (LAVR…IVVG), 59-79 (MMFY…VLFY), and 97-117 (GGMS…LFAW). Arg142 is an a 1,2-diacyl-sn-glycero-3-phospho-(1'-sn-glycerol) binding site. Transmembrane regions (helical) follow at residues 230-250 (MGAI…TVEF) and 265-285 (LSMG…MMIW).

Belongs to the Lgt family.

The protein localises to the cell inner membrane. The enzyme catalyses L-cysteinyl-[prolipoprotein] + a 1,2-diacyl-sn-glycero-3-phospho-(1'-sn-glycerol) = an S-1,2-diacyl-sn-glyceryl-L-cysteinyl-[prolipoprotein] + sn-glycerol 1-phosphate + H(+). Its pathway is protein modification; lipoprotein biosynthesis (diacylglyceryl transfer). Functionally, catalyzes the transfer of the diacylglyceryl group from phosphatidylglycerol to the sulfhydryl group of the N-terminal cysteine of a prolipoprotein, the first step in the formation of mature lipoproteins. This is Phosphatidylglycerol--prolipoprotein diacylglyceryl transferase from Burkholderia mallei (strain NCTC 10247).